The following is a 117-amino-acid chain: Putative iron-sulfur cluster insertion protein ErpA (117 aa).

Iron-sulfur cluster is bound by residues Cys45, Cys109, and Cys111.

This sequence belongs to the HesB/IscA family. Homodimer. The cofactor is iron-sulfur cluster.

In terms of biological role, required for insertion of 4Fe-4S clusters. The sequence is that of Putative iron-sulfur cluster insertion protein ErpA from Methylobacillus flagellatus (strain ATCC 51484 / DSM 6875 / VKM B-1610 / KT).